A 374-amino-acid polypeptide reads, in one-letter code: Peptide chain release factor 2 (374 aa).

The residue at position 254 (Gln-254) is an N5-methylglutamine.

It belongs to the prokaryotic/mitochondrial release factor family. In terms of processing, methylated by PrmC. Methylation increases the termination efficiency of RF2.

It is found in the cytoplasm. Its function is as follows. Peptide chain release factor 2 directs the termination of translation in response to the peptide chain termination codons UGA and UAA. In Renibacterium salmoninarum (strain ATCC 33209 / DSM 20767 / JCM 11484 / NBRC 15589 / NCIMB 2235), this protein is Peptide chain release factor 2.